A 290-amino-acid polypeptide reads, in one-letter code: Elongation factor Ts (290 aa).

The involved in Mg(2+) ion dislocation from EF-Tu stretch occupies residues 82 to 85; sequence TDFV.

Belongs to the EF-Ts family.

It is found in the cytoplasm. Associates with the EF-Tu.GDP complex and induces the exchange of GDP to GTP. It remains bound to the aminoacyl-tRNA.EF-Tu.GTP complex up to the GTP hydrolysis stage on the ribosome. This is Elongation factor Ts from Thiobacillus denitrificans (strain ATCC 25259 / T1).